We begin with the raw amino-acid sequence, 161 residues long: Nucleotide-binding protein Lferr_1091 (161 aa).

The protein belongs to the YajQ family.

Its function is as follows. Nucleotide-binding protein. The chain is Nucleotide-binding protein Lferr_1091 from Acidithiobacillus ferrooxidans (strain ATCC 53993 / BNL-5-31) (Leptospirillum ferrooxidans (ATCC 53993)).